We begin with the raw amino-acid sequence, 863 residues long: DNA mismatch repair protein MutS (863 aa).

Position 607-614 (607-614 (GPNMAGKS)) interacts with ATP.

It belongs to the DNA mismatch repair MutS family.

This protein is involved in the repair of mismatches in DNA. It is possible that it carries out the mismatch recognition step. This protein has a weak ATPase activity. This Caldicellulosiruptor bescii (strain ATCC BAA-1888 / DSM 6725 / KCTC 15123 / Z-1320) (Anaerocellum thermophilum) protein is DNA mismatch repair protein MutS.